Here is a 783-residue protein sequence, read N- to C-terminus: MSRRRAHDTEDESYDHRRNKRRRVSENQEIEDRLESLILRVGERSTSSVESNLEGLVSVLEADLGTFRLKILRILSDCAVRMPEKCTVYTTLVGLLNAKNYKFGGEFVDYMVKTFKESLKLCRWDAARYSLRFLADLVNCHVISATSLLQLLDTIIDVSNEDTVPQVRRDWFVFAVLSTLPWVGRDLYEKKESALESLLLRIEVYLNKRSKKHHNALRVWSSDAPHPQEEYLDCLWAQIRKLRQDNWAEKHIPRPYLVFDAILCEALQHNLPQITPPPHHDAIEYPMPWVVYRMFDYTDCPDGPNLPGAHSIERFLIEEHLHHIIETHHHERKDCAAQLLNFPFKHKIPLEYCIVEVIFAELFHMPTPRYLDICYGSILIELCKLQPGTLPQVLAQATEILFMRIDSMNTSCFDRFVNWFSYHLSNFKFTWSWDEWDSCLLLDAEHPRPKFIQEVLQKCLRLSYHQRITEMMPTTYAKLIPVMPVPNYKYTSEEAANLPGTTVALQLVGAIRQKCTPEEVVNILKEIPSSGYSGEEMSDGSFNALKIDFCGQSKFHVVFRALAETEEAQICILHNIFELWSSHQQMMVVLIDKLLKLQIVDCSAVATWIFSKEMTGEFTKMYLWEILHLTIKKMNKHVIKLDTELDNAKEKLSKADSSSSDTDEDTPHKRKKPITHADKPSEEVVERMEEKLEAANVNQKRLFLIVFQRFIMILSEHLLRSDTDGRDPDTDWYRWTIGRLQQVFLMHHEQVQKYSSTLETLLFTSDLDSHILEVFQQFVALRA.

Residues 1-25 (MSRRRAHDTEDESYDHRRNKRRRVS) are disordered. Position 9 is a phosphothreonine (Thr9). One can recognise an MIF4G domain in the interval 31-243 (EDRLESLILR…CLWAQIRKLR (213 aa)). The tract at residues 652–683 (LSKADSSSSDTDEDTPHKRKKPITHADKPSEE) is disordered.

The protein belongs to the NCBP1 family. As to quaternary structure, component of the nuclear cap-binding complex (CBC), a heterodimer composed of Cbp80 and Cbp20 that interacts with m7GpppG-capped RNA.

The protein localises to the nucleus. Component of the cap-binding complex (CBC), which binds cotranscriptionally to the 5'-cap of pre-mRNAs and is involved in various processes such as pre-mRNA splicing and RNA-mediated gene silencing (RNAi). The CBC complex is involved in miRNA-mediated RNA interference via its interaction with Ars2 and is required for primary microRNAs (miRNAs) processing. Also involved in innate immunity via the short interfering RNAs (siRNAs) processing machinery by restricting the viral RNA production. In the CBC complex, Cbp80 does not bind directly capped RNAs (m7GpppG-capped RNA) but is required to stabilize the movement of the N-terminal loop of Cbp20 and lock the CBC into a high affinity cap-binding state with the cap structure. The sequence is that of Nuclear cap-binding protein subunit 1 (Cbp80) from Drosophila virilis (Fruit fly).